A 542-amino-acid polypeptide reads, in one-letter code: CTP synthase (542 aa).

The segment at 1–265 is amidoligase domain; sequence MARYVFITGG…DSEILSAFGI (265 aa). Ser-13 provides a ligand contact to CTP. UTP is bound at residue Ser-13. 14-19 provides a ligand contact to ATP; sequence SLGKGI. Tyr-54 serves as a coordination point for L-glutamine. An ATP-binding site is contributed by Asp-71. Mg(2+) is bound by residues Asp-71 and Glu-139. CTP-binding positions include 146-148, 186-191, and Lys-222; these read DIE and KTKPTQ. UTP is bound by residues 186–191 and Lys-222; that span reads KTKPTQ. One can recognise a Glutamine amidotransferase type-1 domain in the interval 291–541; that stretch reads TIAIVGKYTG…IAATVEQSRL (251 aa). Ala-353 provides a ligand contact to L-glutamine. Cys-380 functions as the Nucleophile; for glutamine hydrolysis in the catalytic mechanism. L-glutamine-binding positions include 381–384, Glu-404, and Arg-469; that span reads FGMQ. Catalysis depends on residues His-514 and Glu-516.

Belongs to the CTP synthase family. Homotetramer.

It catalyses the reaction UTP + L-glutamine + ATP + H2O = CTP + L-glutamate + ADP + phosphate + 2 H(+). It carries out the reaction L-glutamine + H2O = L-glutamate + NH4(+). The enzyme catalyses UTP + NH4(+) + ATP = CTP + ADP + phosphate + 2 H(+). The protein operates within pyrimidine metabolism; CTP biosynthesis via de novo pathway; CTP from UDP: step 2/2. Allosterically activated by GTP, when glutamine is the substrate; GTP has no effect on the reaction when ammonia is the substrate. The allosteric effector GTP functions by stabilizing the protein conformation that binds the tetrahedral intermediate(s) formed during glutamine hydrolysis. Inhibited by the product CTP, via allosteric rather than competitive inhibition. Its function is as follows. Catalyzes the ATP-dependent amination of UTP to CTP with either L-glutamine or ammonia as the source of nitrogen. Regulates intracellular CTP levels through interactions with the four ribonucleotide triphosphates. The polypeptide is CTP synthase (Bartonella bacilliformis (strain ATCC 35685 / KC583 / Herrer 020/F12,63)).